An 827-amino-acid polypeptide reads, in one-letter code: Periplasmic nitrate reductase (827 aa).

A signal peptide (tat-type signal) is located at residues 1-32 (MELSRRDFMKANAAVAAAAAAGIVLPVKNVQA). One can recognise a 4Fe-4S Mo/W bis-MGD-type domain in the interval 37-93 (IKWDKAPCRFCGTGCSVLVGTKDGRVVATQGDPDAEVNRGLNCIKGYFLSKIMYGAD). [4Fe-4S] cluster-binding residues include Cys-44, Cys-47, Cys-51, and Cys-79. Mo-bis(molybdopterin guanine dinucleotide) is bound by residues Lys-81, Gln-148, Asn-173, Cys-177, 210–217 (WGSNMAEM), 241–245 (STFEH), Met-371, Gln-375, Asn-481, 507–508 (SD), Lys-530, Asp-557, and 717–726 (TGRVLEHWHT). A substrate-binding site is contributed by Phe-793. Asn-801 and Lys-818 together coordinate Mo-bis(molybdopterin guanine dinucleotide).

Belongs to the prokaryotic molybdopterin-containing oxidoreductase family. NasA/NapA/NarB subfamily. As to quaternary structure, component of the periplasmic nitrate reductase NapAB complex composed of NapA and NapB. [4Fe-4S] cluster is required as a cofactor. The cofactor is Mo-bis(molybdopterin guanine dinucleotide). Post-translationally, predicted to be exported by the Tat system. The position of the signal peptide cleavage has not been experimentally proven.

The protein localises to the periplasm. It catalyses the reaction 2 Fe(II)-[cytochrome] + nitrate + 2 H(+) = 2 Fe(III)-[cytochrome] + nitrite + H2O. In terms of biological role, catalytic subunit of the periplasmic nitrate reductase complex NapAB. Receives electrons from NapB and catalyzes the reduction of nitrate to nitrite. This is Periplasmic nitrate reductase from Haemophilus ducreyi (strain 35000HP / ATCC 700724).